A 286-amino-acid polypeptide reads, in one-letter code: Probable ketoamine kinase YniA (286 aa).

91 to 93 (DYL) contacts ATP. The active-site Proton acceptor is aspartate 193.

It belongs to the fructosamine kinase family.

Its function is as follows. Ketoamine kinase that phosphorylates ketoamines on the third carbon of the sugar moiety to generate ketoamine 3-phosphate. The protein is Probable ketoamine kinase YniA (yniA) of Escherichia coli O157:H7.